A 382-amino-acid polypeptide reads, in one-letter code: Alkaline serine protease ver112 (382 aa).

The first 15 residues, 1 to 15 (MRLSIIAAVLPLALA), serve as a signal peptide directing secretion. Residues 16-102 (APVAEPEIAP…IEQDAIFSIN (87 aa)) constitute a propeptide that is removed on maturation. The region spanning 56–99 (SKIPGIERVYENVLNGFSATLSNEELERLRRDPDVESIEQDAIF) is the Inhibitor I9 domain. Residues 111–382 (TWGLTRISHR…VNYLAFNGAT (272 aa)) enclose the Peptidase S8 domain. 2 disulfides stabilise this stretch: Cys-138/Cys-227 and Cys-282/Cys-353. Residues Asp-143, His-173, and Ser-328 each act as charge relay system in the active site.

The protein belongs to the peptidase S8 family.

It is found in the secreted. With respect to regulation, inhibited by phenylmethylsulfonyl fluoride (PMSF). In terms of biological role, serine protease which can degrade the nematode cuticle. This Corniculantispora psalliotae (Lecanicillium psalliotae) protein is Alkaline serine protease ver112.